Consider the following 1234-residue polypeptide: Complement factor H (1234 aa).

The N-terminal stretch at 1 to 18 is a signal peptide; the sequence is MRLSARIIWLILWTVCAA. Sushi domains follow at residues 19 to 82, 83 to 143, 144 to 207, 208 to 264, 265 to 322, 324 to 386, 387 to 444, 446 to 507, 508 to 566, 567 to 624, 627 to 685, 688 to 745, 750 to 804, 806 to 863, 865 to 933, 934 to 991, 992 to 1050, 1051 to 1109, 1112 to 1170, and 1171 to 1234; these read EDCK…ICRK, KPCG…LCEV, VKCL…RCVE, ILCT…FCEE, KRCS…RCTL, PCEF…VPCV, RKCV…KCIR, KTCS…SCIK, SCDM…SCYE, RECS…TCKG, ASCA…VCIE, RTCG…KCVA, EKCR…NCTS, TSCP…RCIE, IPCS…RCVG, LPCG…KCIK, TDCD…VCKD, NSCV…KCRD, GKCG…TCLH, and ACVI…PTCV. Disulfide bonds link Cys-21–Cys-66, Cys-52–Cys-80, Cys-85–Cys-129, Cys-114–Cys-141, Cys-146–Cys-192, Cys-178–Cys-205, Cys-210–Cys-251, Cys-237–Cys-262, Cys-267–Cys-309, Cys-294–Cys-320, Cys-325–Cys-374, Cys-357–Cys-385, Cys-389–Cys-431, Cys-416–Cys-442, Cys-448–Cys-494, Cys-477–Cys-505, Cys-509–Cys-553, Cys-536–Cys-564, Cys-569–Cys-610, Cys-597–Cys-622, Cys-629–Cys-672, Cys-658–Cys-683, Cys-690–Cys-732, Cys-718–Cys-743, Cys-752–Cys-791, Cys-780–Cys-802, Cys-808–Cys-850, Cys-836–Cys-861, Cys-867–Cys-920, Cys-906–Cys-931, Cys-936–Cys-978, Cys-964–Cys-989, Cys-994–Cys-1037, Cys-1023–Cys-1048, Cys-1053–Cys-1096, Cys-1082–Cys-1107, Cys-1114–Cys-1157, Cys-1143–Cys-1168, Cys-1172–Cys-1223, and Cys-1206–Cys-1233. 4 N-linked (GlcNAc...) asparagine glycosylation sites follow: Asn-676, Asn-721, Asn-773, and Asn-801. The disordered stretch occupies residues 872 to 896; sequence TIEHGSINLPRSSEERRDSIESSSH. Residues 883–896 show a composition bias toward basic and acidic residues; it reads SSEERRDSIESSSH. 2 N-linked (GlcNAc...) asparagine glycosylation sites follow: Asn-1030 and Asn-1061. Ser-1198 carries the phosphoserine modification. Asn-1225 is a glycosylation site (N-linked (GlcNAc...) asparagine).

As to quaternary structure, homodimer. Also forms homooligomers. Interacts with complement protein C3b; this interaction inhibits complement activation. Interacts with complement protein C3d. Interacts with CR3/ITGAM; this interaction mediates adhesion of neutrophils to pathogens leading to pathogen clearance. In terms of processing, sulfated on tyrosine residues. CFH is one of the most abundant complement components in blood where the liver is the major source of CFH protein in vivo. in addition, CFH is secreted by additional cell types including monocytes, fibroblasts, or endothelial cells.

The protein resides in the secreted. Functionally, glycoprotein that plays an essential role in maintaining a well-balanced immune response by modulating complement activation. Acts as a soluble inhibitor of complement, where its binding to self markers such as glycan structures prevents complement activation and amplification on cell surfaces. Accelerates the decay of the complement alternative pathway (AP) C3 convertase C3bBb, thus preventing local formation of more C3b, the central player of the complement amplification loop. As a cofactor of the serine protease factor I, CFH also regulates proteolytic degradation of already-deposited C3b. In addition, mediates several cellular responses through interaction with specific receptors. For example, interacts with CR3/ITGAM receptor and thereby mediates the adhesion of human neutrophils to different pathogens. In turn, these pathogens are phagocytosed and destroyed. The polypeptide is Complement factor H (Cfh) (Mus musculus (Mouse)).